We begin with the raw amino-acid sequence, 166 residues long: Small ribosomal subunit protein uS5 (166 aa).

The S5 DRBM domain occupies 11 to 74 (LIEKLVSVKR…ENAKKNMVSV (64 aa)).

The protein belongs to the universal ribosomal protein uS5 family. As to quaternary structure, part of the 30S ribosomal subunit. Contacts proteins S4 and S8.

In terms of biological role, with S4 and S12 plays an important role in translational accuracy. Its function is as follows. Located at the back of the 30S subunit body where it stabilizes the conformation of the head with respect to the body. The chain is Small ribosomal subunit protein uS5 from Francisella tularensis subsp. tularensis (strain FSC 198).